Reading from the N-terminus, the 66-residue chain is Small ribosomal subunit protein eS27 (66 aa).

Residues Cys21, Cys24, Cys40, and Cys43 each coordinate Zn(2+). The C4-type zinc finger occupies 21–43; it reads CPNCGNEQTVFSHATFPVRCLSC.

This sequence belongs to the eukaryotic ribosomal protein eS27 family. Part of the 30S ribosomal subunit. Requires Zn(2+) as cofactor.

This Sulfurisphaera tokodaii (strain DSM 16993 / JCM 10545 / NBRC 100140 / 7) (Sulfolobus tokodaii) protein is Small ribosomal subunit protein eS27.